We begin with the raw amino-acid sequence, 722 residues long: Transmembrane channel-like protein 8 (722 aa).

Residues 1–21 (MFRQWSVQSGPAPRRPESQAA) are disordered. The Cytoplasmic segment spans residues 1–118 (MFRQWSVQSG…GIQSYFTFLR (118 aa)). Phosphoserine occurs at positions 6 and 18. Residues 119–139 (FLLLLNLLTMLLTACFVLLPL) traverse the membrane as a helical segment. Topologically, residues 140–204 (VWLRPPELGP…AGPESSSEYS (65 aa)) are lumenal. Residue Asn-184 is glycosylated (N-linked (GlcNAc...) asparagine). The chain crosses the membrane as a helical span at residues 205-225 (IRLAYLLSPMVCLLLCFCGIL). Residues 226–307 (QRMAEGLPQQ…CRLLTYLRTN (82 aa)) are Cytoplasmic-facing. Residues 308–328 (ILIVLLVVGAISAIFWATKYS) traverse the membrane as a helical segment. Residues 329 to 375 (QDNKEESLFLVLQYLPPGVISLVNFLGPQLFTVLIQLENYPPGTEVN) are Lumenal-facing. The tract at residues 366 to 534 (ENYPPGTEVN…SPRRFRASSS (169 aa)) is TMC domain. An N-linked (GlcNAc...) asparagine glycan is attached at Asn-375. Residues 376–396 (LTLIWCVVLKLASLGMFSFSL) traverse the membrane as a helical segment. The Cytoplasmic portion of the chain corresponds to 397-430 (GQTVLCIGRNKTSCESYGYNACDYQCWENSVGEE). The helical transmembrane segment at 431–451 (LYKLIIFNFLLTVAFAFLVSL) threads the bilayer. At 452–492 (PRRLLVERFSGWFWTWLDREEFLVPKNVLDIVAAQTVTWMG) the chain is on the lumenal side. A helical transmembrane segment spans residues 493–513 (LFYCPLLPLLNSVFLFLTFYI). Topologically, residues 514-536 (KKYTLLRNSRASPRRFRASSSTF) are cytoplasmic. The chain crosses the membrane as a helical span at residues 537–557 (FFHLVLLLGLLLAAVPLAYVI). At 558–598 (SSTHSSWDCGLFTNYSAPWQVVPELVALQLPLPSQRALRYL) the chain is on the lumenal side. Residue Asn-571 is glycosylated (N-linked (GlcNAc...) asparagine). Residues 599-619 (SSHAFSFPLLILLSIVLTVCI) traverse the membrane as a helical segment. The Cytoplasmic portion of the chain corresponds to 620–722 (SQSRANARAI…RFHFPSRTEL (103 aa)). Phosphoserine is present on residues Ser-658, Ser-663, and Ser-673. Residues 658-722 (SPEPGSPHSR…RFHFPSRTEL (65 aa)) are disordered. The span at 678–687 (FPCPGSPGPR) shows a compositional bias: pro residues. Over residues 689–712 (PRLAPSNRLSSSSLGAPSASVPAS) the composition is skewed to low complexity. Ser-698 is subject to Phosphoserine.

It belongs to the TMC family. In terms of assembly, interacts with TMC6. Interacts and forms a complex with TMC6 and CIB1; the interaction stabilizes each component of the complex. Interacts and forms a complex with TMC6 and SLC30A1/ZNT1; the interaction regulates zinc transport into the ER. Interacts with TRADD; the interaction competes with TRADD/RIPK1/TRAF2/cIAPs complex I formation and facilites complex II formation. Expressed in thymus, lung, prostate, placenta, testis and spleen. Expressed in lymphocytes and peripheral lymphocytes.

It localises to the endoplasmic reticulum membrane. The protein localises to the golgi apparatus membrane. Its subcellular location is the nucleus membrane. In terms of biological role, acts as a regulatory protein involved in the regulation of numerous cellular processes. Together with its homolog TMC6/EVER1, forms a complex with calcium-binding protein CIB1 in lymphocytes and keratynocytes where TMC6 and TMC8 stabilize CIB1 levels and reciprocally. Together with TMC6, also forms a complex with and activates zinc transporter ZNT1 at the ER membrane of keratynocytes, thereby facilitating zinc uptake into the ER. Also inhibits receptor-mediated calcium release from ER stores and calcium activated and volume regulated chloride channels. Down-regulates the activity of transcription factors induced by zinc and cytokines. Also sequesters TRADD which impairs the recruitment of TRAF2 and RIPK1 in the pro-survival complex I and promotes proapoptotic complex II formation, and may therefore be involved in TNF-induced cell death/survival decisions. In Mus musculus (Mouse), this protein is Transmembrane channel-like protein 8.